Reading from the N-terminus, the 362-residue chain is Chorismate synthase (362 aa).

2 residues coordinate NADP(+): R48 and R54. FMN contacts are provided by residues 131–133 (RSS), 243–244 (NA), G287, 302–306 (KPTSS), and R328.

This sequence belongs to the chorismate synthase family. In terms of assembly, homotetramer. FMNH2 is required as a cofactor.

It catalyses the reaction 5-O-(1-carboxyvinyl)-3-phosphoshikimate = chorismate + phosphate. The protein operates within metabolic intermediate biosynthesis; chorismate biosynthesis; chorismate from D-erythrose 4-phosphate and phosphoenolpyruvate: step 7/7. Its function is as follows. Catalyzes the anti-1,4-elimination of the C-3 phosphate and the C-6 proR hydrogen from 5-enolpyruvylshikimate-3-phosphate (EPSP) to yield chorismate, which is the branch point compound that serves as the starting substrate for the three terminal pathways of aromatic amino acid biosynthesis. This reaction introduces a second double bond into the aromatic ring system. The sequence is that of Chorismate synthase from Rhodopseudomonas palustris (strain TIE-1).